The primary structure comprises 1122 residues: MKKLIFKLSVGITPLALIGLGSFGLAVSGAKPNNLKPVNQVGEMNSQGQSNLLEKARRWRNSNFTSLSIDGTNPGALVLTGSKSISRIDLYGNVIWTFDPGNTNDLTGKVGFYDANNRLTAFSGDVPFNVSDLSSKTVVEATQDQEDPNVFYLLLIPDAAVQQEQKTKDQVFENYFMSDAPATGDTSAEGSATPAGGGSSSSAAGGGAVAPAAASSTARLVEEGNSAGMGTMTPTASTSETVIDYNSDQNKIPKPKTLLDSSESSESINGGRTYANINTQNNLQGVIVKVNENLFNSENPFAVENMAFIKPKDMVDNYPSTWTQGSANGKMTNVLQFYKHDNPNAVNNRFYRAKYYPKRLETQTTTPLIDSSFSPYEHPEWYEDNQFVMPWMQYITNLGGLYAKDGMVYLFGGNGTWVNNESALSIGVFRTKFENRTAEAPGNTKTVGYPYGILLSAISFDATRNGLALAPASLGQDVGYHFVPRLAVGGVSSPRGANGNIFLGSAITWGTNGGNFLDTKWHSPAVIEDAPTTFVTVNSSGALQNSGNPQPTSTPMPNSNGNESIPYRWTNSYDYNSVRFAALISKPAGGNTKQVESLFTTALKLDTLNSLPNKFTQENNIFFSYAMLDGRQWSLGTRKDSAWLTTNTINNFTYNTQQQLASTVAGENANPRNILNALTTAKGFDRRDIGNVVYTYSNNTNKFTYYYQVGGAITTWPEVQVNYKTSANITYYNLTRTDFGSTTPATQDANTVSSKLNGAYLSSTGDQQGWYNGSIYVKKASFTPSSQGYTWQDFKGLTTTASNAVISNWTKAGYSIRPDDDTVFNVSKIPFEKEITAAVNVRSLDSYYVQLNGETSVNTVARVSPDSSALALNPNRITNPLMNRDNVIGQGAFISRNDIPSSFFENKINDIVTTEADGKEVLDSKYINSIYRYTPPQNNPDIRLRLLVIDRSRATNDFIKLLPQVLVDGEYVAVPQANSVFVSDQEFTGFDALPGYVLPVAISIPIIIIALALALGLGIGIPMSQNRKMLKQGFAISNKKVDILTTAVGSVFKQIINRTSVTNIKKTPQMLQANKKDGASSPSKPSAPAAKKPAGPTKPSAPGAKPTAPAKPKAPAPTKKIE.

The N-terminal stretch at 1 to 26 is a signal peptide; the sequence is MKKLIFKLSVGITPLALIGLGSFGLA. Disordered stretches follow at residues 182-208, 244-273, and 541-562; these read ATGDTSAEGSATPAGGGSSSSAAGGGA, DYNSDQNKIPKPKTLLDSSESSESINGGRT, and GALQNSGNPQPTSTPMPNSNGN. The span at 195-208 shows a compositional bias: gly residues; that stretch reads AGGGSSSSAAGGGA. Residues 259–273 are compositionally biased toward polar residues; that stretch reads LDSSESSESINGGRT. A helical membrane pass occupies residues 1001–1021; sequence AISIPIIIIALALALGLGIGI. The segment at 1066–1122 is disordered; that stretch reads KTPQMLQANKKDGASSPSKPSAPAAKKPAGPTKPSAPGAKPTAPAKPKAPAPTKKIE. The span at 1079–1122 shows a compositional bias: low complexity; sequence ASSPSKPSAPAAKKPAGPTKPSAPGAKPTAPAKPKAPAPTKKIE.

The protein belongs to the adhesin P1 family.

It is found in the cell membrane. Could be involved in cytadherence. The chain is Adhesin P1 (gapA) from Mycoplasmoides gallisepticum (strain R(low / passage 15 / clone 2)) (Mycoplasma gallisepticum).